A 212-amino-acid chain; its full sequence is Ribonuclease HII (212 aa).

Residues 28 to 212 (SIIAGVDEVG…KSFAPIRQVV (185 aa)) form the RNase H type-2 domain. A divalent metal cation is bound by residues Asp34, Glu35, and Asp127.

It belongs to the RNase HII family. The cofactor is Mn(2+). It depends on Mg(2+) as a cofactor.

The protein localises to the cytoplasm. The enzyme catalyses Endonucleolytic cleavage to 5'-phosphomonoester.. Functionally, endonuclease that specifically degrades the RNA of RNA-DNA hybrids. The chain is Ribonuclease HII from Chlamydia caviae (strain ATCC VR-813 / DSM 19441 / 03DC25 / GPIC) (Chlamydophila caviae).